A 598-amino-acid chain; its full sequence is Insulin-like growth factor 2 mRNA-binding protein 1 (598 aa).

2 consecutive RRM domains span residues 2–75 (NKLY…HSVP) and 81–156 (RKLQ…YIPD). The interval 155–195 (PDENSEVDSQRGPDNGRRPGYGPRGTSRQMSPGSGIPSKHQ) is disordered. A compositionally biased stretch (basic and acidic residues) spans 162 to 171 (DSQRGPDNGR). S185 is subject to Phosphoserine. KH domains are found at residues 198 to 263 (DIPL…CRMI) and 279 to 346 (EVPL…EQEI). The residue at position 399 (Y399) is a Phosphotyrosine. KH domains follow at residues 407–472 (QETV…QGRI) and 489–555 (KLET…QRKI). The interval 561–598 (QVKQQQKGGGMGTPQGPHPQGMTELGSPQGLAQEPRRK) is disordered. A phosphothreonine mark is found at T573 and T583. Residues 574 to 583 (PQGPHPQGMT) show a composition bias toward low complexity. S587 bears the Phosphoserine mark.

Belongs to the RRM IMP/VICKZ family. As to quaternary structure, component of the CRD-mediated complex.

The protein localises to the nucleus. It is found in the cytoplasm. It localises to the perinuclear region. Its subcellular location is the P-body. The protein resides in the stress granule. The protein localises to the cell projection. It is found in the growth cone. It localises to the filopodium. Its subcellular location is the lamellipodium. Its function is as follows. RNA-binding factor that recruits target transcripts to cytoplasmic protein-RNA complexes (mRNPs). This transcript 'caging' into mRNPs allows mRNA transport and transient storage. It also modulates the rate and location at which target transcripts encounter the translational apparatus and shields them from endonuclease attacks or microRNA-mediated degradation. Preferentially binds to N6-methyladenosine (m6A)-containing mRNAs and increases their stability. Plays a direct role in the transport and translation of transcripts required for axonal regeneration in adult sensory neurons. Regulates localized beta-actin/ACTB mRNA translation in polarized cells, a crucial process for cell migration and neurite outgrowth. Promotes the directed movement of cells by fine-tuning intracellular signaling networks and enhances the velocity of cell migration. The sequence is that of Insulin-like growth factor 2 mRNA-binding protein 1 (igf2bp1) from Danio rerio (Zebrafish).